The primary structure comprises 407 residues: Phosphonoacetate hydrolase (407 aa).

Residues aspartate 25, threonine 64, aspartate 202, histidine 206, aspartate 241, histidine 242, and histidine 368 each contribute to the Zn(2+) site. Threonine 64 and aspartate 202 together coordinate substrate. The substrate site is built by histidine 242 and histidine 368.

Belongs to the alkaline phosphatase family. PhnA subfamily. As to quaternary structure, homodimer. The cofactor is Zn(2+).

It catalyses the reaction phosphonoacetate + H2O = acetate + phosphate + H(+). Completely inhibited by EDTA and 1,10-phenanthroline. Moderately inhibited by the phosphonocarboxylic acids phosphonoformate and 3-phosphonopropionate and the phosphonate herbicide glyphosate. Partially inhibited by the reducing agents sodium sulfide and dithiotheitol and the chelating agent iminodiacetate. Nonphosphonate analogs of phosphonoacetate, such as arsonoacetate, sulfonoacetate and malonate are poor inhibitors. Inorganic phosphate, acetate and the known phosphonotase inhibitor phosphite have little effect on activity. Not inhibited by the alkylphosphonic acids methylphosphonate and ethylphosphonate, or the aminoalkylphosphonates 2-aminoethylphosphonate, 3-aminopropylphosphonate and 4-aminobutylphosphonate. Fe(3+), Ca(2+), Mg(2+) and Cs(+) have no effect on activity. Activity is slightly increased by the aminoalkylphosphonates 1-aminoethylphosphonate, 1-aminobutylphosphonate, 2-amino-4-butylphosphonate. Activity is increased by Zn(2+), Mn(2+) and Co(2+), these 3 metal ions also allow recovery of activity after EDTA treatment. Its function is as follows. Specifically hydrolyzes phosphonoacetate. Does not have activity on other organophosphonates or acetates. The chain is Phosphonoacetate hydrolase from Pseudomonas fluorescens.